A 692-amino-acid polypeptide reads, in one-letter code: A-type ATP synthase subunit I (692 aa).

7 helical membrane-spanning segments follow: residues 389–409, 422–442, 494–514, 531–551, 553–573, 602–622, and 624–644; these read GIMLTDAVYGLLLTIIGLFIW, LGYILTLAGISTVIMGIITGG, ILVFSIFVGLIHLLIGLFVGF, GVWILLILSIFVGIGLMFAGA, TMIAGGIIGIFVVLAILASMY, ARLLALCLATGGLAMAVNIMA, and LVGESIPVIGIIVAIIILLVG.

Belongs to the V-ATPase 116 kDa subunit family. As to quaternary structure, the A-type ATPase is composed of subunits A(3), B(3), C, D, E(1 or 2), F, H(2), I and K(x).

The protein localises to the cell membrane. Functionally, component of the A-type ATP synthase that produces ATP from ADP in the presence of a proton gradient across the membrane. The polypeptide is A-type ATP synthase subunit I (Methanocaldococcus jannaschii (strain ATCC 43067 / DSM 2661 / JAL-1 / JCM 10045 / NBRC 100440) (Methanococcus jannaschii)).